We begin with the raw amino-acid sequence, 283 residues long: MADITAALVKELRERTGAGMMDCKKALVESNGDIELAIENMRKSGAIKAAKKAGNVAADGVIKTKIEGNYGLILEVNCQTDFVAKDAGFQAFADKVLDAAFAGKITDVEVLKAQFEEERVALVAKIGENINIRRVASLEGEVLGSYLHGARIGVLIAATGADEELVKQIAMHVAASKPEFVKPEDVSAEVVEKEYQVQLDIAMQSGKPKEIAEKMVEGRMKKFTGEVSLTGQPFVIEPSKTVGQVLKEHNADVVNFIRFEVGEGIAKVENDFAAEVAAMSKQS.

The tract at residues 80–83 (TDFV) is involved in Mg(2+) ion dislocation from EF-Tu.

It belongs to the EF-Ts family.

The protein localises to the cytoplasm. Associates with the EF-Tu.GDP complex and induces the exchange of GDP to GTP. It remains bound to the aminoacyl-tRNA.EF-Tu.GTP complex up to the GTP hydrolysis stage on the ribosome. In Serratia proteamaculans (strain 568), this protein is Elongation factor Ts.